We begin with the raw amino-acid sequence, 392 residues long: Leucine aminopeptidase 1 (392 aa).

Positions 1 to 18 (MKFSQASLLAACLPAISA) are cleaved as a signal peptide. Positions 19-82 (RFIETAEADN…LGSTRLNAQT (64 aa)) are excised as a propeptide. N-linked (GlcNAc...) asparagine glycosylation is present at N174. 4 residues coordinate Zn(2+): H182, D201, E240, and D267. The cysteines at positions 316 and 320 are disulfide-linked. Residue H349 participates in Zn(2+) binding.

It belongs to the peptidase M28 family. M28E subfamily. In terms of assembly, monomer. Requires Zn(2+) as cofactor.

Its subcellular location is the secreted. In terms of biological role, extracellular aminopeptidase that allows assimilation of proteinaceous substrates. The protein is Leucine aminopeptidase 1 (LAP1) of Fusarium vanettenii (strain ATCC MYA-4622 / CBS 123669 / FGSC 9596 / NRRL 45880 / 77-13-4) (Fusarium solani subsp. pisi).